Here is a 351-residue protein sequence, read N- to C-terminus: Ion-translocating oxidoreductase complex subunit D (351 aa).

4 helical membrane-spanning segments follow: residues Ile18–Gly38, Gly40–Leu60, Leu87–Ala107, and Pro121–Leu141. Position 185 is an FMN phosphoryl threonine (Thr185). A run of 5 helical transmembrane segments spans residues Val211–Leu231, Ile241–Pro261, Phe264–Ala284, Leu298–Pro318, and Val321–Pro341.

The protein belongs to the NqrB/RnfD family. The complex is composed of six subunits: RnfA, RnfB, RnfC, RnfD, RnfE and RnfG. The cofactor is FMN.

It is found in the cell inner membrane. Part of a membrane-bound complex that couples electron transfer with translocation of ions across the membrane. The polypeptide is Ion-translocating oxidoreductase complex subunit D (Yersinia pestis).